Here is a 435-residue protein sequence, read N- to C-terminus: Pregnancy-specific beta-1-glycoprotein 6 (435 aa).

The first 34 residues, 1–34 (MGPLSAPPCTQHITWKGLLLTASLLNFWNLPTTA), serve as a signal peptide directing secretion. In terms of domain architecture, Ig-like V-type spans 35–143 (QVIIEAKPPK…TGYFTVTLYS (109 aa)). Residues Asn61, Asn103, and Asn110 are each glycosylated (N-linked (GlcNAc...) asparagine). The Cell attachment site signature appears at 126–128 (RGD). 3 Ig-like C2-type domains span residues 148-233 (PSIS…VTLN), 241-326 (PYIT…VTLN), and 334-405 (PRIY…KEIS). Disulfide bonds link Cys168–Cys216, Cys261–Cys309, and Cys353–Cys393. Residues Asn198, Asn267, Asn302, and Asn386 are each glycosylated (N-linked (GlcNAc...) asparagine).

The protein belongs to the immunoglobulin superfamily. CEA family.

The protein localises to the secreted. This Homo sapiens (Human) protein is Pregnancy-specific beta-1-glycoprotein 6 (PSG6).